The primary structure comprises 194 residues: Ribonuclease HII (194 aa).

Residues 3–193 form the RNase H type-2 domain; sequence ILTAGVDEAG…VRNLLAQQAL (191 aa). Residues Asp-9, Glu-10, and Asp-101 each contribute to the a divalent metal cation site.

Belongs to the RNase HII family. The cofactor is Mn(2+). Mg(2+) serves as cofactor.

It localises to the cytoplasm. The enzyme catalyses Endonucleolytic cleavage to 5'-phosphomonoester.. Endonuclease that specifically degrades the RNA of RNA-DNA hybrids. The polypeptide is Ribonuclease HII (rnhB) (Neisseria meningitidis serogroup A / serotype 4A (strain DSM 15465 / Z2491)).